The chain runs to 614 residues: Aspartate--tRNA ligase (614 aa).

Residue Glu-174 coordinates L-aspartate. Positions 198–201 are aspartate; that stretch reads QLFK. Arg-220 contributes to the L-aspartate binding site. Residues 220–222 and Gln-229 each bind ATP; that span reads RDE. His-448 is a binding site for L-aspartate. Glu-482 is an ATP binding site. An L-aspartate-binding site is contributed by Arg-489. 534-537 provides a ligand contact to ATP; that stretch reads GLDR. A disordered region spans residues 587-614; it reads YEDSVKETEQRLEKEAQEDADKNSTWDE.

The protein belongs to the class-II aminoacyl-tRNA synthetase family. Type 1 subfamily. As to quaternary structure, homodimer.

The protein localises to the cytoplasm. It carries out the reaction tRNA(Asp) + L-aspartate + ATP = L-aspartyl-tRNA(Asp) + AMP + diphosphate. Catalyzes the attachment of L-aspartate to tRNA(Asp) in a two-step reaction: L-aspartate is first activated by ATP to form Asp-AMP and then transferred to the acceptor end of tRNA(Asp). The sequence is that of Aspartate--tRNA ligase from Lactobacillus johnsonii (strain CNCM I-12250 / La1 / NCC 533).